We begin with the raw amino-acid sequence, 340 residues long: Maltose epimerase (340 aa).

Arg-79 contacts substrate. His-178 acts as the Proton donor in catalysis. Asp-247 contacts substrate. The active-site Proton acceptor is the Glu-305.

The protein belongs to the aldose epimerase family.

It carries out the reaction alpha-maltose = beta-maltose. It participates in carbohydrate metabolism; hexose metabolism. Its function is as follows. Catalyzes the interconversion of alpha and beta anomers of maltose. The sequence is that of Maltose epimerase from Levilactobacillus brevis (strain ATCC 367 / BCRC 12310 / CIP 105137 / JCM 1170 / LMG 11437 / NCIMB 947 / NCTC 947) (Lactobacillus brevis).